The chain runs to 447 residues: Tubulin beta-1 chain (447 aa).

Gln11, Glu69, Ser138, Gly142, Thr143, Gly144, Asn204, and Asn226 together coordinate GTP. Glu69 lines the Mg(2+) pocket. Positions 424-447 (QYQDATAEEEGEGDEEEAEGEAAA) are disordered. Acidic residues predominate over residues 429 to 447 (TAEEEGEGDEEEAEGEAAA).

This sequence belongs to the tubulin family. As to quaternary structure, dimer of alpha and beta chains. A typical microtubule is a hollow water-filled tube with an outer diameter of 25 nm and an inner diameter of 15 nM. Alpha-beta heterodimers associate head-to-tail to form protofilaments running lengthwise along the microtubule wall with the beta-tubulin subunit facing the microtubule plus end conferring a structural polarity. Microtubules usually have 13 protofilaments but different protofilament numbers can be found in some organisms and specialized cells. Requires Mg(2+) as cofactor.

It localises to the cytoplasm. The protein localises to the cytoskeleton. Tubulin is the major constituent of microtubules, a cylinder consisting of laterally associated linear protofilaments composed of alpha- and beta-tubulin heterodimers. Microtubules grow by the addition of GTP-tubulin dimers to the microtubule end, where a stabilizing cap forms. Below the cap, tubulin dimers are in GDP-bound state, owing to GTPase activity of alpha-tubulin. This is Tubulin beta-1 chain (TUBB1) from Cyanophora paradoxa.